Reading from the N-terminus, the 163-residue chain is MPSFDIVSEVDLQEVRNAVENATRELASRWDFRNVEASVELNEKNETIKLTTISDFQVKQLVDILREKLVKRGIEAGALEIPEECEHSGKLYSVEAKLQKGIDSVMAKKLVKLIKDSKLKVQTQIQGEQLRVTGKSRDDLQGAMALVRGADLGQPFQFNNFRD.

This sequence belongs to the YajQ family.

In terms of biological role, nucleotide-binding protein. This chain is Nucleotide-binding protein NT01EI_1072, found in Edwardsiella ictaluri (strain 93-146).